Reading from the N-terminus, the 702-residue chain is p-hydroxybenzoic acid--AMP ligase FadD22 (702 aa).

Residues 538–616 (ERHRLVLDAV…GLAQYLEAEL (79 aa)) enclose the Carrier domain. O-(pantetheine 4'-phosphoryl)serine is present on serine 576.

The protein belongs to the ATP-dependent AMP-binding enzyme family.

The catalysed reaction is holo-[4-hydroxyphenylalkanoate synthase] + 4-hydroxybenzoate + ATP = 4-hydroxyphenyl-[4-hydroxyphenylalkanoate synthase] + AMP + diphosphate. The protein operates within lipid metabolism; fatty acid biosynthesis. Its function is as follows. Catalyzes the adenylation of p-hydroxybenzoic acid (pHBA) to form p-hydroxybenzoic acid-AMP (pHBA-AMP), which is converted directly to p-hydroxybenzoyl-S-FadD22 (pHBA-S-FAdD22) thioester intermediate in a CoA-independent manner by attack of the phosphopantetheine thiol of FadD22. This intermediate primes the biosynthesis of the phenolphthiocerol (PPOL) by presenting the pHBA starter unit for elongation by Pks15/1. PPOL is an important intermediate in the biosynthesis of phenolic glycolipid (mycosid B). This is p-hydroxybenzoic acid--AMP ligase FadD22 (fadD22) from Mycobacterium marinum (strain ATCC BAA-535 / M).